Here is a 339-residue protein sequence, read N- to C-terminus: tRNA N6-adenosine threonylcarbamoyltransferase (339 aa).

His107 and His111 together coordinate Fe cation. Substrate is bound by residues 129-133, Asp162, Gly175, and Asn279; that span reads LVSGG. Asp307 is a binding site for Fe cation.

The protein belongs to the KAE1 / TsaD family. Fe(2+) is required as a cofactor.

The protein resides in the cytoplasm. It catalyses the reaction L-threonylcarbamoyladenylate + adenosine(37) in tRNA = N(6)-L-threonylcarbamoyladenosine(37) in tRNA + AMP + H(+). Its function is as follows. Required for the formation of a threonylcarbamoyl group on adenosine at position 37 (t(6)A37) in tRNAs that read codons beginning with adenine. Is involved in the transfer of the threonylcarbamoyl moiety of threonylcarbamoyl-AMP (TC-AMP) to the N6 group of A37, together with TsaE and TsaB. TsaD likely plays a direct catalytic role in this reaction. This chain is tRNA N6-adenosine threonylcarbamoyltransferase, found in Campylobacter curvus (strain 525.92).